Reading from the N-terminus, the 206-residue chain is uncharacterized protein (206 aa).

This is an uncharacterized protein from Mycoplasma pneumoniae (strain ATCC 29342 / M129 / Subtype 1) (Mycoplasmoides pneumoniae).